The following is a 272-amino-acid chain: Heat stress transcription factor A-7a (272 aa).

The tract at residues 1 to 26 (MMNPFLPEGCDPPPPPQPMEGLHENA) is disordered. A DNA-binding region spans residues 27–121 (PPPFLTKTFE…LLKNIKRRNP (95 aa)). The hydrophobic repeat HR-A/B stretch occupies residues 132 to 186 (ACNELRREKQVLMMEIVSLRQQQQTTKSYIKAMEQRIEGTERKQRQMMSFLARAM). The Bipartite nuclear localization signal signature appears at 201–216 (KKIKELEDNESAKRKR). Residues 203 to 212 (IKELEDNESA) show a composition bias toward basic and acidic residues. The segment at 203–223 (IKELEDNESAKRKRGSSSMSE) is disordered. An AHA motif is present at residues 256 to 265 (DGFWEELLSD).

This sequence belongs to the HSF family. Class A subfamily. Homotrimer. In terms of processing, exhibits temperature-dependent phosphorylation.

It localises to the nucleus. In terms of biological role, transcriptional activator that specifically binds DNA sequence 5'-AGAAnnTTCT-3' known as heat shock promoter elements (HSE). The chain is Heat stress transcription factor A-7a (HSFA7A) from Arabidopsis thaliana (Mouse-ear cress).